The following is a 339-amino-acid chain: Deoxyguanosinetriphosphate triphosphohydrolase-like protein (339 aa).

One can recognise an HD domain in the interval 75–186; that stretch reads RLTHTLEVAQ…VQISDKIAYI (112 aa).

It belongs to the dGTPase family. Type 2 subfamily.

This chain is Deoxyguanosinetriphosphate triphosphohydrolase-like protein, found in Caldanaerobacter subterraneus subsp. tengcongensis (strain DSM 15242 / JCM 11007 / NBRC 100824 / MB4) (Thermoanaerobacter tengcongensis).